Consider the following 617-residue polypeptide: Acetolactate synthase large subunit (617 aa).

Residue E71 participates in thiamine diphosphate binding. FAD contacts are provided by residues R173, H281–R302, and E324–D343. The thiamine pyrophosphate binding stretch occupies residues Q413 to W492. Mg(2+) is bound by residues D463 and N490.

The protein belongs to the TPP enzyme family. In terms of assembly, dimer of large and small chains. It depends on Mg(2+) as a cofactor. Requires thiamine diphosphate as cofactor.

It catalyses the reaction 2 pyruvate + H(+) = (2S)-2-acetolactate + CO2. The protein operates within amino-acid biosynthesis; L-isoleucine biosynthesis; L-isoleucine from 2-oxobutanoate: step 1/4. It functions in the pathway amino-acid biosynthesis; L-valine biosynthesis; L-valine from pyruvate: step 1/4. The protein is Acetolactate synthase large subunit (ilvB) of Parasynechococcus marenigrum (strain WH8102).